A 149-amino-acid chain; its full sequence is 3-dehydroquinate dehydratase (149 aa).

Residue Tyr25 is the Proton acceptor of the active site. Positions 76, 82, and 89 each coordinate substrate. His102 (proton donor) is an active-site residue. Substrate is bound by residues 103-104 and Arg113; that span reads LS.

Belongs to the type-II 3-dehydroquinase family. In terms of assembly, homododecamer.

The enzyme catalyses 3-dehydroquinate = 3-dehydroshikimate + H2O. The protein operates within metabolic intermediate biosynthesis; chorismate biosynthesis; chorismate from D-erythrose 4-phosphate and phosphoenolpyruvate: step 3/7. Catalyzes a trans-dehydration via an enolate intermediate. The sequence is that of 3-dehydroquinate dehydratase from Acaryochloris marina (strain MBIC 11017).